A 279-amino-acid chain; its full sequence is Fructose-1,6-bisphosphatase class 1 (279 aa).

Mg(2+) contacts are provided by glutamate 65, aspartate 85, leucine 87, and aspartate 88. Residues 88–91, tyrosine 190, and lysine 221 contribute to the substrate site; that span reads DGSS. Glutamate 227 lines the Mg(2+) pocket.

The protein belongs to the FBPase class 1 family. Homotetramer. Mg(2+) serves as cofactor.

The protein localises to the cytoplasm. It catalyses the reaction beta-D-fructose 1,6-bisphosphate + H2O = beta-D-fructose 6-phosphate + phosphate. The protein operates within carbohydrate biosynthesis; gluconeogenesis. This chain is Fructose-1,6-bisphosphatase class 1, found in Helicobacter hepaticus (strain ATCC 51449 / 3B1).